The primary structure comprises 384 residues: Large ribosomal subunit protein uL3m (384 aa).

Disordered regions lie at residues 80 to 101 (NQVTQGLPAPTSGPAAALKRRE) and 237 to 262 (QEASHGNSLNHRTIGSVGGSQGSGSR). A compositionally biased stretch (polar residues) spans 240 to 249 (SHGNSLNHRT).

It belongs to the universal ribosomal protein uL3 family. As to quaternary structure, component of the mitochondrial large ribosomal subunit (mt-LSU). Mature N.crassa 74S mitochondrial ribosomes consist of a small (37S) and a large (54S) subunit. The 37S small subunit contains a 16S ribosomal RNA (16S mt-rRNA) and 32 different proteins. The 54S large subunit contains a 23S rRNA (23S mt-rRNA) and 42 different proteins.

The protein resides in the mitochondrion. In terms of biological role, component of the mitochondrial ribosome (mitoribosome), a dedicated translation machinery responsible for the synthesis of mitochondrial genome-encoded proteins, including at least some of the essential transmembrane subunits of the mitochondrial respiratory chain. The mitoribosomes are attached to the mitochondrial inner membrane and translation products are cotranslationally integrated into the membrane. This is Large ribosomal subunit protein uL3m (mrpl9) from Neurospora crassa (strain ATCC 24698 / 74-OR23-1A / CBS 708.71 / DSM 1257 / FGSC 987).